Here is a 702-residue protein sequence, read N- to C-terminus: Arginine decarboxylase 1 (702 aa).

Lys-151 carries the N6-(pyridoxal phosphate)lysine modification. Residue 336 to 346 (IDVGGGLGIDY) coordinates substrate. Positions 668–686 (ASGESSGMSSDSEGSAAGA) are enriched in low complexity. The disordered stretch occupies residues 668–702 (ASGESSGMSSDSEGSAAGAAEEDDDEWEFMRGLTV).

Belongs to the Orn/Lys/Arg decarboxylase class-II family. SpeA subfamily. It depends on pyridoxal 5'-phosphate as a cofactor. Mg(2+) serves as cofactor. Expressed in roots, leaves and stems (at protein level).

It catalyses the reaction L-arginine + H(+) = agmatine + CO2. It functions in the pathway amine and polyamine biosynthesis; agmatine biosynthesis; agmatine from L-arginine: step 1/1. This Oryza sativa subsp. japonica (Rice) protein is Arginine decarboxylase 1 (ADC1).